Reading from the N-terminus, the 222-residue chain is Triosephosphate isomerase (222 aa).

Residue 9 to 11 (NLK) coordinates substrate. His93 functions as the Electrophile in the catalytic mechanism. Glu141 (proton acceptor) is an active-site residue. Substrate is bound by residues Ile146, Gly181, and 202 to 203 (AS).

The protein belongs to the triosephosphate isomerase family. In terms of assembly, homotetramer; dimer of dimers.

It localises to the cytoplasm. The catalysed reaction is D-glyceraldehyde 3-phosphate = dihydroxyacetone phosphate. Its pathway is carbohydrate biosynthesis; gluconeogenesis. The protein operates within carbohydrate degradation; glycolysis; D-glyceraldehyde 3-phosphate from glycerone phosphate: step 1/1. Its function is as follows. Involved in the gluconeogenesis. Catalyzes stereospecifically the conversion of dihydroxyacetone phosphate (DHAP) to D-glyceraldehyde-3-phosphate (G3P). The protein is Triosephosphate isomerase of Methanoculleus marisnigri (strain ATCC 35101 / DSM 1498 / JR1).